Reading from the N-terminus, the 92-residue chain is Acylphosphatase (92 aa).

An Acylphosphatase-like domain is found at 5-92; it reads RVHIIVSGLV…TSCREFRILT (88 aa). Residues Arg20 and Asn38 contribute to the active site.

Belongs to the acylphosphatase family.

The enzyme catalyses an acyl phosphate + H2O = a carboxylate + phosphate + H(+). This is Acylphosphatase (acyP) from Chlorobaculum tepidum (strain ATCC 49652 / DSM 12025 / NBRC 103806 / TLS) (Chlorobium tepidum).